The following is a 142-amino-acid chain: Large ribosomal subunit protein uL13 (142 aa).

Belongs to the universal ribosomal protein uL13 family. As to quaternary structure, part of the 50S ribosomal subunit.

Its function is as follows. This protein is one of the early assembly proteins of the 50S ribosomal subunit, although it is not seen to bind rRNA by itself. It is important during the early stages of 50S assembly. In Azotobacter vinelandii (strain DJ / ATCC BAA-1303), this protein is Large ribosomal subunit protein uL13.